The sequence spans 558 residues: Dihydroxy-acid dehydratase (558 aa).

Residue Asp81 participates in Mg(2+) binding. Cys122 lines the [2Fe-2S] cluster pocket. 2 residues coordinate Mg(2+): Asp123 and Lys124. At Lys124 the chain carries N6-carboxylysine. Cys195 lines the [2Fe-2S] cluster pocket. Glu447 contacts Mg(2+). Ser473 (proton acceptor) is an active-site residue.

It belongs to the IlvD/Edd family. As to quaternary structure, homodimer. [2Fe-2S] cluster is required as a cofactor. The cofactor is Mg(2+).

It carries out the reaction (2R)-2,3-dihydroxy-3-methylbutanoate = 3-methyl-2-oxobutanoate + H2O. It catalyses the reaction (2R,3R)-2,3-dihydroxy-3-methylpentanoate = (S)-3-methyl-2-oxopentanoate + H2O. It participates in amino-acid biosynthesis; L-isoleucine biosynthesis; L-isoleucine from 2-oxobutanoate: step 3/4. It functions in the pathway amino-acid biosynthesis; L-valine biosynthesis; L-valine from pyruvate: step 3/4. In terms of biological role, functions in the biosynthesis of branched-chain amino acids. Catalyzes the dehydration of (2R,3R)-2,3-dihydroxy-3-methylpentanoate (2,3-dihydroxy-3-methylvalerate) into 2-oxo-3-methylpentanoate (2-oxo-3-methylvalerate) and of (2R)-2,3-dihydroxy-3-methylbutanoate (2,3-dihydroxyisovalerate) into 2-oxo-3-methylbutanoate (2-oxoisovalerate), the penultimate precursor to L-isoleucine and L-valine, respectively. The polypeptide is Dihydroxy-acid dehydratase (Bacillus pumilus (strain SAFR-032)).